The primary structure comprises 289 residues: Phosphatidylserine decarboxylase proenzyme (289 aa).

Residues Asp92, His149, and Ser254 each act as charge relay system; for autoendoproteolytic cleavage activity in the active site. The active-site Schiff-base intermediate with substrate; via pyruvic acid; for decarboxylase activity is Ser254. Residue Ser254 is modified to Pyruvic acid (Ser); by autocatalysis.

Belongs to the phosphatidylserine decarboxylase family. PSD-B subfamily. Prokaryotic type I sub-subfamily. As to quaternary structure, heterodimer of a large membrane-associated beta subunit and a small pyruvoyl-containing alpha subunit. Requires pyruvate as cofactor. Is synthesized initially as an inactive proenzyme. Formation of the active enzyme involves a self-maturation process in which the active site pyruvoyl group is generated from an internal serine residue via an autocatalytic post-translational modification. Two non-identical subunits are generated from the proenzyme in this reaction, and the pyruvate is formed at the N-terminus of the alpha chain, which is derived from the carboxyl end of the proenzyme. The autoendoproteolytic cleavage occurs by a canonical serine protease mechanism, in which the side chain hydroxyl group of the serine supplies its oxygen atom to form the C-terminus of the beta chain, while the remainder of the serine residue undergoes an oxidative deamination to produce ammonia and the pyruvoyl prosthetic group on the alpha chain. During this reaction, the Ser that is part of the protease active site of the proenzyme becomes the pyruvoyl prosthetic group, which constitutes an essential element of the active site of the mature decarboxylase.

The protein localises to the cell membrane. It carries out the reaction a 1,2-diacyl-sn-glycero-3-phospho-L-serine + H(+) = a 1,2-diacyl-sn-glycero-3-phosphoethanolamine + CO2. The protein operates within phospholipid metabolism; phosphatidylethanolamine biosynthesis; phosphatidylethanolamine from CDP-diacylglycerol: step 2/2. Its function is as follows. Catalyzes the formation of phosphatidylethanolamine (PtdEtn) from phosphatidylserine (PtdSer). The polypeptide is Phosphatidylserine decarboxylase proenzyme (Pseudomonas aeruginosa (strain ATCC 15692 / DSM 22644 / CIP 104116 / JCM 14847 / LMG 12228 / 1C / PRS 101 / PAO1)).